The following is a 404-amino-acid chain: Argininosuccinate synthase (404 aa).

ATP is bound by residues 10–18 (AYSGGLDTS) and alanine 37. The L-citrulline site is built by tyrosine 90 and serine 95. Residue glycine 120 coordinates ATP. L-aspartate is bound by residues threonine 122, asparagine 126, and aspartate 127. Asparagine 126 is a binding site for L-citrulline. 5 residues coordinate L-citrulline: arginine 130, serine 181, serine 190, glutamate 266, and tyrosine 278.

Belongs to the argininosuccinate synthase family. Type 1 subfamily. As to quaternary structure, homotetramer.

It is found in the cytoplasm. It carries out the reaction L-citrulline + L-aspartate + ATP = 2-(N(omega)-L-arginino)succinate + AMP + diphosphate + H(+). It participates in amino-acid biosynthesis; L-arginine biosynthesis; L-arginine from L-ornithine and carbamoyl phosphate: step 2/3. The protein is Argininosuccinate synthase of Erythrobacter litoralis (strain HTCC2594).